Consider the following 527-residue polypeptide: Peptide chain release factor 3 (527 aa).

The tr-type G domain maps to 9 to 278; sequence NKRRTFAIIS…GLTQWAPKPQ (270 aa). GTP contacts are provided by residues 18 to 25, 86 to 90, and 140 to 143; these read SHPDAGKT, DTPGH, and NKLD.

Belongs to the TRAFAC class translation factor GTPase superfamily. Classic translation factor GTPase family. PrfC subfamily.

The protein localises to the cytoplasm. Functionally, increases the formation of ribosomal termination complexes and stimulates activities of RF-1 and RF-2. It binds guanine nucleotides and has strong preference for UGA stop codons. It may interact directly with the ribosome. The stimulation of RF-1 and RF-2 is significantly reduced by GTP and GDP, but not by GMP. The sequence is that of Peptide chain release factor 3 from Haemophilus influenzae (strain PittGG).